We begin with the raw amino-acid sequence, 187 residues long: Orotate phosphoribosyltransferase (187 aa).

5-phospho-alpha-D-ribose 1-diphosphate is bound by residues Arg98, Lys99, Lys102, His104, and 128–136 (EDVTTTGGS). Residues Thr132 and Arg160 each coordinate orotate.

This sequence belongs to the purine/pyrimidine phosphoribosyltransferase family. PyrE subfamily. As to quaternary structure, homodimer. Requires Mg(2+) as cofactor.

The enzyme catalyses orotidine 5'-phosphate + diphosphate = orotate + 5-phospho-alpha-D-ribose 1-diphosphate. It functions in the pathway pyrimidine metabolism; UMP biosynthesis via de novo pathway; UMP from orotate: step 1/2. Catalyzes the transfer of a ribosyl phosphate group from 5-phosphoribose 1-diphosphate to orotate, leading to the formation of orotidine monophosphate (OMP). The sequence is that of Orotate phosphoribosyltransferase from Rhodopseudomonas palustris (strain BisB18).